A 123-amino-acid polypeptide reads, in one-letter code: Small ribosomal subunit protein uS13c (123 aa).

The tract at residues 90–123 is disordered; that stretch reads GKRHRNNLPVRGQRTRTNARSRRGSKKTVTGKKK. A compositionally biased stretch (basic residues) spans 102 to 123; sequence QRTRTNARSRRGSKKTVTGKKK.

Belongs to the universal ribosomal protein uS13 family. As to quaternary structure, part of the 30S ribosomal subunit.

It is found in the plastid. The protein resides in the chloroplast. In terms of biological role, located at the top of the head of the 30S subunit, it contacts several helices of the 16S rRNA. The protein is Small ribosomal subunit protein uS13c of Trieres chinensis (Marine centric diatom).